A 369-amino-acid chain; its full sequence is Ubiquitin-conjugating enzyme E2 Q2 (369 aa).

The segment at 117–143 (DQPLPTGQNGTTEEVTSEEEEEEEMAE) is disordered. A compositionally biased stretch (acidic residues) spans 131–143 (VTSEEEEEEEMAE). In terms of domain architecture, UBC core spans 198-362 (QASDRLMKEL…VQIHEKNGWY (165 aa)). Cysteine 298 (glycyl thioester intermediate) is an active-site residue.

This sequence belongs to the ubiquitin-conjugating enzyme family. Auto-ubiquitinated in vitro. Detected at embryo implantation sites in the luminal epithelium of pregnant endometrium. Detected at low levels in ovary and liver.

Its subcellular location is the cytoplasm. The catalysed reaction is S-ubiquitinyl-[E1 ubiquitin-activating enzyme]-L-cysteine + [E2 ubiquitin-conjugating enzyme]-L-cysteine = [E1 ubiquitin-activating enzyme]-L-cysteine + S-ubiquitinyl-[E2 ubiquitin-conjugating enzyme]-L-cysteine.. It functions in the pathway protein modification; protein ubiquitination. Functionally, accepts ubiquitin from the E1 complex and catalyzes its covalent attachment to other proteins. In vitro catalyzes 'Lys-48'-linked polyubiquitination. This chain is Ubiquitin-conjugating enzyme E2 Q2 (UBE2Q2), found in Oryctolagus cuniculus (Rabbit).